Reading from the N-terminus, the 994-residue chain is Transposase for transposon Tn2501 (994 aa).

This sequence belongs to the transposase 7 family.

Functionally, required for transposition of transposon Tn2501. This Escherichia coli protein is Transposase for transposon Tn2501 (tnpA).